The chain runs to 478 residues: UDP-glycosyltransferase 71B5 (478 aa).

UDP-alpha-D-glucose is bound by residues Ser280, 347–349 (APQ), 364–372 (HCGWNSILE), and 386–389 (YAEQ).

Belongs to the UDP-glycosyltransferase family.

Its function is as follows. Possesses low quercetin 3-O-glucosyltransferase activity in vitro. The sequence is that of UDP-glycosyltransferase 71B5 (UGT71B5) from Arabidopsis thaliana (Mouse-ear cress).